A 449-amino-acid chain; its full sequence is Phosphoglucosamine mutase (449 aa).

S100 acts as the Phosphoserine intermediate in catalysis. Residues S100, D240, D242, and D244 each contribute to the Mg(2+) site. S100 carries the post-translational modification Phosphoserine.

Belongs to the phosphohexose mutase family. The cofactor is Mg(2+). Activated by phosphorylation.

The catalysed reaction is alpha-D-glucosamine 1-phosphate = D-glucosamine 6-phosphate. Catalyzes the conversion of glucosamine-6-phosphate to glucosamine-1-phosphate. This Clostridium novyi (strain NT) protein is Phosphoglucosamine mutase.